We begin with the raw amino-acid sequence, 841 residues long: MIECDAPAVALAPTPALHAAIAGACRRIAPLWPLKNFVAVNPFMGFSGQSFHATCATLHRVARLETLMPRAFYREAIRSGTIERADLAAALAAAPADWCLPTEVGELLKLADNDKTVRKHPAVVATVAEVLTELAAGDRHVARTAFMTDEISRWCAAYFDEGQSVWRMPARGLRPYAAWRASVRYDRNPEAMGIARFRELVAELPEDYVAAIATVVDRLGVPARAIEDYLHQALLEIGGWAAYARYLMWDHELAGDRDDTLEQLLAIRVVWGYALFVQRTDAEFREAWRRAMEQAALPPLDDKLGGDPDLCINMVLQEAYEIAFRRRLLHRLGQSPAAQASGARPAVQAAFCIDVRSEVYRRAMESISSAVETIGFAGFFGFPIEFVPIGHITGRAHCPVLLRPQFTVCEAVDGTSEDEDSEILVMRLLRRRVRKAWKSFKLSAVSSFIYVETAGLLFAGKILSDSLAVTRTVHDPNTDGLDDAVIGRLGPRISPRLVGGRATGFDQAQRVAMAEAVLRAMSMTGPFARLVMLTGHGSTSVNNPHAAGLDCGACGGNTGEANARVAAAILNDSDVRAGLRDRGIDIPEDTFFLGCLHDTTTDEIKLYDLERLPASHREDLRVLRELLAKATSLTRLERATLLGVAGRADAEQRVVTRSRDWAQVRPEWGLAGNASFIAAPRARTRGIDLGGRAFLHEYDWRQDKDFATLQLIMTAPMVVASWINLQYYGSTVNNAAFGAGNKVLHNVAGTIGVLEGNAGDLKVGLPWQSVHDGTRFVHEPLRLAVLIEAPLEAIGRVIAQNSGVRELVDNAWLHLYAISGQGRVSHRYRSGLQWQAIDPQS.

Residues Cys-352, Asp-354, His-536, and Cys-551 each contribute to the Zn(2+) site.

This sequence belongs to the inorganic carbon transporter (TC 9.A.2) DabA family. As to quaternary structure, forms a complex with DabB. Requires Zn(2+) as cofactor.

It localises to the cell inner membrane. Its function is as follows. Part of an energy-coupled inorganic carbon pump. This Bradyrhizobium sp. (strain ORS 278) protein is Probable inorganic carbon transporter subunit DabA 1.